A 501-amino-acid polypeptide reads, in one-letter code: Glycerol kinase (501 aa).

T11 lines the ADP pocket. Residues T11, T12, and S13 each contribute to the ATP site. Residue T11 participates in sn-glycerol 3-phosphate binding. An ADP-binding site is contributed by R15. R81, E82, Y133, and D242 together coordinate sn-glycerol 3-phosphate. Positions 81, 82, 133, 242, and 243 each coordinate glycerol. Residues T264 and G307 each coordinate ADP. Residues T264, G307, Q311, and G409 each coordinate ATP. 2 residues coordinate ADP: G409 and N413.

It belongs to the FGGY kinase family.

It catalyses the reaction glycerol + ATP = sn-glycerol 3-phosphate + ADP + H(+). It participates in polyol metabolism; glycerol degradation via glycerol kinase pathway; sn-glycerol 3-phosphate from glycerol: step 1/1. Its activity is regulated as follows. Inhibited by fructose 1,6-bisphosphate (FBP). In terms of biological role, key enzyme in the regulation of glycerol uptake and metabolism. Catalyzes the phosphorylation of glycerol to yield sn-glycerol 3-phosphate. In Borreliella afzelii (strain PKo) (Borrelia afzelii), this protein is Glycerol kinase.